The chain runs to 556 residues: Formate--tetrahydrofolate ligase (556 aa).

ATP is bound at residue 65-72 (TPAGEGKT).

Belongs to the formate--tetrahydrofolate ligase family.

It carries out the reaction (6S)-5,6,7,8-tetrahydrofolate + formate + ATP = (6R)-10-formyltetrahydrofolate + ADP + phosphate. It functions in the pathway one-carbon metabolism; tetrahydrofolate interconversion. In Lachnoclostridium phytofermentans (strain ATCC 700394 / DSM 18823 / ISDg) (Clostridium phytofermentans), this protein is Formate--tetrahydrofolate ligase.